The chain runs to 160 residues: Transcription elongation factor GreA (160 aa).

A coiled-coil region spans residues 1–71; it reads MAEKTYPMTK…GQISTLETQI (71 aa).

The protein belongs to the GreA/GreB family.

Functionally, necessary for efficient RNA polymerase transcription elongation past template-encoded arresting sites. The arresting sites in DNA have the property of trapping a certain fraction of elongating RNA polymerases that pass through, resulting in locked ternary complexes. Cleavage of the nascent transcript by cleavage factors such as GreA or GreB allows the resumption of elongation from the new 3'terminus. GreA releases sequences of 2 to 3 nucleotides. The sequence is that of Transcription elongation factor GreA from Streptococcus uberis (strain ATCC BAA-854 / 0140J).